The following is a 61-amino-acid chain: Large ribosomal subunit protein bL28 (61 aa).

The protein belongs to the bacterial ribosomal protein bL28 family.

The protein is Large ribosomal subunit protein bL28 of Lactobacillus gasseri (strain ATCC 33323 / DSM 20243 / BCRC 14619 / CIP 102991 / JCM 1131 / KCTC 3163 / NCIMB 11718 / NCTC 13722 / AM63).